The chain runs to 463 residues: Nitrogenase iron-molybdenum cofactor biosynthesis protein NifE (463 aa).

The protein belongs to the NifD/NifK/NifE/NifN family.

It participates in cofactor biosynthesis; Fe-Mo cofactor biosynthesis. Functionally, this protein may play a role in the biosynthesis of the prosthetic group of nitrogenase (FeMo cofactor). The sequence is that of Nitrogenase iron-molybdenum cofactor biosynthesis protein NifE (nifE2) from Methanosarcina barkeri.